Reading from the N-terminus, the 477-residue chain is Transmembrane and coiled-coil domain protein 3 (477 aa).

Serine 46 is subject to Phosphoserine. Residues 112–153 (KQVFEKKNQKSAHSIAQLQKKLEQYHRKLREIEQNGASRSSK) are a coiled coil. Disordered stretches follow at residues 168 to 188 (KDAHVKSRTAPHCMESSKSGM) and 249 to 277 (PKYGSDDECSSGTSGSADSNGNQSFGAGG). A Phosphoserine modification is found at serine 253. Residues 258 to 273 (SSGTSGSADSNGNQSF) are compositionally biased toward polar residues. Positions 282-398 (DSQGKLAVIL…KLELHQQEQQ (117 aa)) form a coiled coil. The next 2 helical transmembrane spans lie at 417 to 437 (VILAFMTVILVCVSTIAKFVS) and 450 to 470 (FFAVTLLAIFCKNWDHILCAI).

The protein belongs to the TEX28 family. In terms of assembly, may form homodimers and heterodimers with TMCC2 or TMCC3 via the coiled-coil domains. Interacts with ribosomal proteins RPL4 and RPS6. In terms of tissue distribution, widely expressed, with highest levels in brain, spinal cord and testis.

It is found in the endoplasmic reticulum membrane. The polypeptide is Transmembrane and coiled-coil domain protein 3 (Homo sapiens (Human)).